The primary structure comprises 197 residues: Probable GTP-binding protein EngB (197 aa).

Residues 22–195 form the EngB-type G domain; sequence GFPEIGLAGR…WQWIEAHTVG (174 aa). Residues 30-37, 57-61, 75-78, 142-145, and 174-176 each bind GTP; these read GRSNVGKS, GKTQT, DVPG, TKSD, and FSA. Mg(2+) is bound by residues Ser-37 and Thr-59.

Belongs to the TRAFAC class TrmE-Era-EngA-EngB-Septin-like GTPase superfamily. EngB GTPase family. Requires Mg(2+) as cofactor.

Its function is as follows. Necessary for normal cell division and for the maintenance of normal septation. In Lactiplantibacillus plantarum (strain ATCC BAA-793 / NCIMB 8826 / WCFS1) (Lactobacillus plantarum), this protein is Probable GTP-binding protein EngB.